Here is a 204-residue protein sequence, read N- to C-terminus: Urease accessory protein UreG (204 aa).

10–17 contacts GTP; sequence GPVGAGKT.

This sequence belongs to the SIMIBI class G3E GTPase family. UreG subfamily. As to quaternary structure, homodimer. UreD, UreF and UreG form a complex that acts as a GTP-hydrolysis-dependent molecular chaperone, activating the urease apoprotein by helping to assemble the nickel containing metallocenter of UreC. The UreE protein probably delivers the nickel.

The protein localises to the cytoplasm. Facilitates the functional incorporation of the urease nickel metallocenter. This process requires GTP hydrolysis, probably effectuated by UreG. The chain is Urease accessory protein UreG from Bacillus sp. (strain TB-90).